Here is a 274-residue protein sequence, read N- to C-terminus: Rhamnulose-1-phosphate aldolase (274 aa).

Residue glutamate 117 is part of the active site. Residues histidine 141, histidine 143, and histidine 212 each contribute to the Zn(2+) site.

It belongs to the aldolase class II family. RhaD subfamily. Homotetramer. Requires Zn(2+) as cofactor.

The protein localises to the cytoplasm. It catalyses the reaction L-rhamnulose 1-phosphate = (S)-lactaldehyde + dihydroxyacetone phosphate. It functions in the pathway carbohydrate degradation; L-rhamnose degradation; glycerone phosphate from L-rhamnose: step 3/3. Its function is as follows. Catalyzes the reversible cleavage of L-rhamnulose-1-phosphate to dihydroxyacetone phosphate (DHAP) and L-lactaldehyde. In Escherichia coli O81 (strain ED1a), this protein is Rhamnulose-1-phosphate aldolase.